We begin with the raw amino-acid sequence, 384 residues long: Deoxyguanosinetriphosphate triphosphohydrolase-like protein (384 aa).

In terms of domain architecture, HD spans 62–198; that stretch reads RLTHSLEVST…AALADDISYI (137 aa).

It belongs to the dGTPase family. Type 2 subfamily.

The sequence is that of Deoxyguanosinetriphosphate triphosphohydrolase-like protein from Rickettsia peacockii (strain Rustic).